Consider the following 218-residue polypeptide: uncharacterized protein (218 aa).

A Response regulatory domain is found at 7-123 (RVALADDQPL…ELIDAIRAAA (117 aa)). Asp-58 bears the 4-aspartylphosphate mark. The HTH luxR-type domain occupies 150-215 (AEELAEPFTK…QAVVFAIRNG (66 aa)). The segment at residues 174-193 (NEDIAEKLFVSESTVKTHVH) is a DNA-binding region (H-T-H motif).

In terms of processing, phosphorylated by YxjM.

The protein localises to the cytoplasm. Probable member of the two-component regulatory system YxjM/YxjL. This is an uncharacterized protein from Bacillus subtilis (strain 168).